A 501-amino-acid polypeptide reads, in one-letter code: Bifunctional purine biosynthesis protein PurH (501 aa).

The region spanning 1-144 (MKKRALISVF…KNFKDVVVLS (144 aa)) is the MGS-like domain.

It belongs to the PurH family.

It carries out the reaction (6R)-10-formyltetrahydrofolate + 5-amino-1-(5-phospho-beta-D-ribosyl)imidazole-4-carboxamide = 5-formamido-1-(5-phospho-D-ribosyl)imidazole-4-carboxamide + (6S)-5,6,7,8-tetrahydrofolate. It catalyses the reaction IMP + H2O = 5-formamido-1-(5-phospho-D-ribosyl)imidazole-4-carboxamide. It participates in purine metabolism; IMP biosynthesis via de novo pathway; 5-formamido-1-(5-phospho-D-ribosyl)imidazole-4-carboxamide from 5-amino-1-(5-phospho-D-ribosyl)imidazole-4-carboxamide (10-formyl THF route): step 1/1. The protein operates within purine metabolism; IMP biosynthesis via de novo pathway; IMP from 5-formamido-1-(5-phospho-D-ribosyl)imidazole-4-carboxamide: step 1/1. In Clostridium perfringens (strain 13 / Type A), this protein is Bifunctional purine biosynthesis protein PurH.